The chain runs to 139 residues: Putative pre-16S rRNA nuclease (139 aa).

Belongs to the YqgF nuclease family.

It localises to the cytoplasm. Could be a nuclease involved in processing of the 5'-end of pre-16S rRNA. This is Putative pre-16S rRNA nuclease from Streptococcus pneumoniae serotype 19F (strain G54).